A 361-amino-acid chain; its full sequence is Ribosomal RNA large subunit methyltransferase M (361 aa).

Residues Ser-187, 220–223 (CPGG), Asp-239, Asp-259, and Asp-276 contribute to the S-adenosyl-L-methionine site. Lys-305 serves as the catalytic Proton acceptor.

It belongs to the class I-like SAM-binding methyltransferase superfamily. RNA methyltransferase RlmE family. RlmM subfamily. As to quaternary structure, monomer.

It localises to the cytoplasm. It catalyses the reaction cytidine(2498) in 23S rRNA + S-adenosyl-L-methionine = 2'-O-methylcytidine(2498) in 23S rRNA + S-adenosyl-L-homocysteine + H(+). In terms of biological role, catalyzes the 2'-O-methylation at nucleotide C2498 in 23S rRNA. The polypeptide is Ribosomal RNA large subunit methyltransferase M (Shewanella baltica (strain OS223)).